Reading from the N-terminus, the 120-residue chain is Large ribosomal subunit protein bL20c (120 aa).

It belongs to the bacterial ribosomal protein bL20 family.

The protein resides in the plastid. Functionally, binds directly to 23S ribosomal RNA and is necessary for the in vitro assembly process of the 50S ribosomal subunit. It is not involved in the protein synthesizing functions of that subunit. The protein is Large ribosomal subunit protein bL20c of Cuscuta obtusiflora (Peruvian dodder).